Here is a 635-residue protein sequence, read N- to C-terminus: Probable ethylene response sensor 2 (635 aa).

The next 3 membrane-spanning stretches (helical) occupy residues 24–44, 59–79, and 94–114; these read ISDF…IYFV, FGAF…TFAI, and ATAV…PDLL. Cu cation-binding residues include Cys-66 and His-70. Residues 159 to 308 form the GAF domain; sequence DRHTILRTTL…VVADQVAVAL (150 aa). The 239-residue stretch at 351 to 589 folds into the Histidine kinase domain; that stretch reads VMNHEMRTPM…MFFVKLGMPE (239 aa). Phosphohistidine; by autocatalysis is present on His-354.

It belongs to the ethylene receptor family. In terms of assembly, homodimer. Cu cation is required as a cofactor. In terms of tissue distribution, expressed in anthers and hulls.

Its subcellular location is the endoplasmic reticulum membrane. It catalyses the reaction ATP + protein L-histidine = ADP + protein N-phospho-L-histidine.. Its function is as follows. Ethylene receptor related to bacterial two-component regulators. Acts as a negative regulator of ethylene signaling. May play a role in the regulation of flowering by up-regulating GI (GIGANTEA) and RCN1 and regulate starch accumulation by down-regulating the alpha-amylase AMY3D. The sequence is that of Probable ethylene response sensor 2 from Oryza sativa subsp. indica (Rice).